The following is a 494-amino-acid chain: Bifunctional protein HldE (494 aa).

The segment at 1-334 is ribokinase; the sequence is MPTPILDFDA…RKILPHAYLA (334 aa). ATP is bound at residue 209–212; sequence NRKE. Aspartate 279 is a catalytic residue. Residues 362–494 are cytidylyltransferase; that stretch reads FTNGCFDILH…LVHRARGGAK (133 aa).

This sequence in the N-terminal section; belongs to the carbohydrate kinase PfkB family. The protein in the C-terminal section; belongs to the cytidylyltransferase family. As to quaternary structure, homodimer.

The catalysed reaction is D-glycero-beta-D-manno-heptose 7-phosphate + ATP = D-glycero-beta-D-manno-heptose 1,7-bisphosphate + ADP + H(+). The enzyme catalyses D-glycero-beta-D-manno-heptose 1-phosphate + ATP + H(+) = ADP-D-glycero-beta-D-manno-heptose + diphosphate. The protein operates within nucleotide-sugar biosynthesis; ADP-L-glycero-beta-D-manno-heptose biosynthesis; ADP-L-glycero-beta-D-manno-heptose from D-glycero-beta-D-manno-heptose 7-phosphate: step 1/4. It participates in nucleotide-sugar biosynthesis; ADP-L-glycero-beta-D-manno-heptose biosynthesis; ADP-L-glycero-beta-D-manno-heptose from D-glycero-beta-D-manno-heptose 7-phosphate: step 3/4. In terms of biological role, catalyzes the phosphorylation of D-glycero-D-manno-heptose 7-phosphate at the C-1 position to selectively form D-glycero-beta-D-manno-heptose-1,7-bisphosphate. Catalyzes the ADP transfer from ATP to D-glycero-beta-D-manno-heptose 1-phosphate, yielding ADP-D-glycero-beta-D-manno-heptose. The chain is Bifunctional protein HldE from Bradyrhizobium diazoefficiens (strain JCM 10833 / BCRC 13528 / IAM 13628 / NBRC 14792 / USDA 110).